A 427-amino-acid chain; its full sequence is Peptidyl-prolyl cis-trans isomerase sig-7 (427 aa).

Residues 6–161 (ETTLGDLIID…KDIRISHTIV (156 aa)) enclose the PPIase cyclophilin-type domain. Residues 195–227 (DEKEDEDEGKTAEEIAEELQQREMAEQAQILEM) are a coiled coil. The 79-residue stretch at 241-319 (NVLFVCKLNP…RRIHVDFSQS (79 aa)) folds into the RRM domain. Residues 322 to 334 (QNYKYKPKSQQQE) are compositionally biased toward polar residues. Residues 322-427 (QNYKYKPKSQ…RSPDRRRDRR (106 aa)) form a disordered region. Basic residues predominate over residues 351–370 (SHQRSPSPRRRRSPSPKKDK). Residues 384–427 (SSDNHRDRDRSYRDNNRDRRDNHRDSDRDRRRHDRSPDRRRDRR) show a composition bias toward basic and acidic residues.

Belongs to the cyclophilin-type PPIase family. PPIL4 subfamily. Interacts with ama-1, the catalytic subunit of the RNA polymerase II (RNA pol II) complex. In terms of tissue distribution, ubiquitous.

The protein localises to the nucleus. It is found in the nucleoplasm. The protein resides in the chromosome. It catalyses the reaction [protein]-peptidylproline (omega=180) = [protein]-peptidylproline (omega=0). Probable PPIase that accelerates the folding of proteins. It catalyzes the cis-trans isomerization of proline imidic peptide bonds in oligopeptides. Involved in RNA polymerase II (RNA pol II)-mediated transcription elongation, and in primary transcript splicing, including co-transcriptional trans-splicing, in association with the catalytic subunit of the RNA pol II complex ama-1. Also plays a role in the regulation of elongation-dependent phosphorylation of ama-1 to control transcription. Involved in the transcription of several genes during embryogenesis and in particular, of genes related to developmental processes such as gastrulation, and also regulates transcription in germ cells from embryogenesis to adulthood. This Caenorhabditis elegans protein is Peptidyl-prolyl cis-trans isomerase sig-7.